A 146-amino-acid polypeptide reads, in one-letter code: Hemoglobin subunit beta (146 aa).

The Globin domain maps to 2–146 (QWTAEEKQLI…VAHALARKYH (145 aa)). 2 residues coordinate heme b: H63 and H92.

Belongs to the globin family. In terms of assembly, heterotetramer of two alpha chains and two beta chains. As to expression, red blood cells.

Functionally, involved in oxygen transport from the lung to the various peripheral tissues. The sequence is that of Hemoglobin subunit beta (HBB) from Sturnus vulgaris (Starling).